An 87-amino-acid polypeptide reads, in one-letter code: Large ribosomal subunit protein eL20 (87 aa).

It belongs to the eukaryotic ribosomal protein eL20 family. In terms of assembly, part of the 50S ribosomal subunit. Binds 23S rRNA.

This is Large ribosomal subunit protein eL20 from Hyperthermus butylicus (strain DSM 5456 / JCM 9403 / PLM1-5).